The sequence spans 488 residues: GTPase Der (488 aa).

EngA-type G domains lie at 3-166 (PVVA…AEAM) and 199-372 (IKLA…DSAT). GTP-binding positions include 9–16 (GRPNVGKS), 56–60 (DTGGI), 118–121 (NKID), 205–212 (GKPNVGKS), 252–256 (DTAGV), and 317–320 (NKWD). A KH-like domain is found at 373 to 457 (RRVSTSMLTR…PIQLRFQEGD (85 aa)).

This sequence belongs to the TRAFAC class TrmE-Era-EngA-EngB-Septin-like GTPase superfamily. EngA (Der) GTPase family. In terms of assembly, associates with the 50S ribosomal subunit.

In terms of biological role, GTPase that plays an essential role in the late steps of ribosome biogenesis. The sequence is that of GTPase Der from Shewanella sp. (strain MR-7).